A 175-amino-acid chain; its full sequence is Co-chaperone protein HscB homolog (175 aa).

Positions Ser7–Leu79 constitute a J domain.

The protein belongs to the HscB family. In terms of assembly, interacts with HscA and stimulates its ATPase activity.

In terms of biological role, co-chaperone involved in the maturation of iron-sulfur cluster-containing proteins. Seems to help targeting proteins to be folded toward HscA. The polypeptide is Co-chaperone protein HscB homolog (Burkholderia cenocepacia (strain ATCC BAA-245 / DSM 16553 / LMG 16656 / NCTC 13227 / J2315 / CF5610) (Burkholderia cepacia (strain J2315))).